The following is a 103-amino-acid chain: Large ribosomal subunit protein bL21 (103 aa).

Belongs to the bacterial ribosomal protein bL21 family. As to quaternary structure, part of the 50S ribosomal subunit. Contacts protein L20.

In terms of biological role, this protein binds to 23S rRNA in the presence of protein L20. The sequence is that of Large ribosomal subunit protein bL21 from Lactobacillus helveticus (strain DPC 4571).